A 300-amino-acid chain; its full sequence is Protein phosphatase 2C 1 (300 aa).

Residues 23–298 (IFAASEMQGW…DNMTTILVYL (276 aa)) enclose the PPM-type phosphatase domain. Positions 57, 58, 237, and 289 each coordinate Mn(2+).

Belongs to the PP2C family. Requires Mg(2+) as cofactor. Mn(2+) is required as a cofactor. Post-translationally, the N-terminus is blocked.

The protein localises to the membrane. It catalyses the reaction O-phospho-L-seryl-[protein] + H2O = L-seryl-[protein] + phosphate. It carries out the reaction O-phospho-L-threonyl-[protein] + H2O = L-threonyl-[protein] + phosphate. Its function is as follows. Serine and threonine phosphatase. This chain is Protein phosphatase 2C 1, found in Paramecium tetraurelia.